The chain runs to 472 residues: Pyruvate kinase (472 aa).

Position 33 (Arg33) interacts with substrate. K(+) contacts are provided by Asn35, Ser37, and Asp67. An ATP-binding site is contributed by 35 to 38; it reads NFSH. 2 residues coordinate ATP: Arg74 and Lys155. Position 220 (Glu220) interacts with Mg(2+). Substrate is bound by residues Gly243, Asp244, and Thr276. Asp244 provides a ligand contact to Mg(2+).

The protein belongs to the pyruvate kinase family. In terms of assembly, homotetramer. It depends on Mg(2+) as a cofactor. K(+) serves as cofactor.

The catalysed reaction is pyruvate + ATP = phosphoenolpyruvate + ADP + H(+). It participates in carbohydrate degradation; glycolysis; pyruvate from D-glyceraldehyde 3-phosphate: step 5/5. This is Pyruvate kinase (pyk) from Mycobacterium tuberculosis (strain CDC 1551 / Oshkosh).